The primary structure comprises 359 residues: Pyruvate dehydrogenase E1 component subunit beta, mitochondrial (359 aa).

Residues 1 to 30 (MAAVAGLVRGPLRQASGLLKRRFHRSAPAA) constitute a mitochondrion transit peptide. Y67 carries the phosphotyrosine modification. Residue E89 participates in thiamine diphosphate binding. Residues I142, A190, I191, D193, and N195 each coordinate K(+). The residue at position 354 (K354) is an N6-acetyllysine.

In terms of assembly, heterotetramer of two PDHA1 and two PDHB subunits. The heterotetramer interacts with DLAT, and is part of the multimeric pyruvate dehydrogenase complex that contains multiple copies of pyruvate dehydrogenase (E1), dihydrolipoamide acetyltransferase (DLAT, E2) and lipoamide dehydrogenase (DLD, E3). These subunits are bound to an inner core composed of about 48 DLAT and 12 PDHX molecules. Interacts with DLAT. Requires thiamine diphosphate as cofactor.

Its subcellular location is the mitochondrion matrix. It catalyses the reaction N(6)-[(R)-lipoyl]-L-lysyl-[protein] + pyruvate + H(+) = N(6)-[(R)-S(8)-acetyldihydrolipoyl]-L-lysyl-[protein] + CO2. In terms of biological role, the pyruvate dehydrogenase complex catalyzes the overall conversion of pyruvate to acetyl-CoA and CO(2), and thereby links the glycolytic pathway to the tricarboxylic cycle. This chain is Pyruvate dehydrogenase E1 component subunit beta, mitochondrial (Pdhb), found in Rattus norvegicus (Rat).